The chain runs to 883 residues: Translation initiation factor IF-2 (883 aa).

A compositionally biased stretch (polar residues) spans 32-45 (NDLNGKNNSNSSIN). Disordered stretches follow at residues 32-216 (NDLN…QNKY) and 251-275 (RKLGEKKKQQQESQKSYKRKKAETE). Basic and acidic residues predominate over residues 46-62 (LDKHNNKVEYSQNRDNR). Over residues 75-216 (GGYSQNRDNR…VGKNTSQNKY (142 aa)) the composition is skewed to polar residues. Residues 251-260 (RKLGEKKKQQ) show a composition bias toward basic and acidic residues. A tr-type G domain is found at 381-554 (EKPPVITIMG…DMMLLKANPS (174 aa)). Residues 390–397 (GHVDHGKT) form a G1 region. A GTP-binding site is contributed by 390-397 (GHVDHGKT). The segment at 415–419 (GITQH) is G2. Residues 436–439 (DTPG) are G3. Residues 436 to 440 (DTPGH) and 490 to 493 (NKID) each bind GTP. Positions 490-493 (NKID) are G4. Residues 526–528 (SAL) are G5.

Belongs to the TRAFAC class translation factor GTPase superfamily. Classic translation factor GTPase family. IF-2 subfamily.

The protein localises to the cytoplasm. One of the essential components for the initiation of protein synthesis. Protects formylmethionyl-tRNA from spontaneous hydrolysis and promotes its binding to the 30S ribosomal subunits. Also involved in the hydrolysis of GTP during the formation of the 70S ribosomal complex. The protein is Translation initiation factor IF-2 of Borrelia garinii subsp. bavariensis (strain ATCC BAA-2496 / DSM 23469 / PBi) (Borreliella bavariensis).